A 290-amino-acid polypeptide reads, in one-letter code: Shikimate dehydrogenase (NADP(+)) (290 aa).

Residues Ser-20–Ser-22 and Thr-67 contribute to the shikimate site. Lys-71 serves as the catalytic Proton acceptor. Residues Asn-92 and Asp-107 each coordinate shikimate. NADP(+) is bound by residues Gly-132 to Ala-136 and Met-228. Tyr-230 serves as a coordination point for shikimate. Gly-251 contributes to the NADP(+) binding site.

The protein belongs to the shikimate dehydrogenase family. As to quaternary structure, homodimer.

The catalysed reaction is shikimate + NADP(+) = 3-dehydroshikimate + NADPH + H(+). Its pathway is metabolic intermediate biosynthesis; chorismate biosynthesis; chorismate from D-erythrose 4-phosphate and phosphoenolpyruvate: step 4/7. In terms of biological role, involved in the biosynthesis of the chorismate, which leads to the biosynthesis of aromatic amino acids. Catalyzes the reversible NADPH linked reduction of 3-dehydroshikimate (DHSA) to yield shikimate (SA). This chain is Shikimate dehydrogenase (NADP(+)), found in Geobacter sp. (strain M21).